Here is a 99-residue protein sequence, read N- to C-terminus: SAGA-associated factor 11 (99 aa).

Residues 71–92 (IHCENCGRDVSANRLAAHLQRC) form an SGF11-type zinc finger.

The protein belongs to the SGF11 family. Component of the 1.8 MDa SAGA transcription coactivator-HAT complex. SAGA is built of 5 distinct domains with specialized functions. Within the SAGA complex, SUS1, SGF11, SGF73 and UBP8 form an additional subcomplex of SAGA called the DUB module (deubiquitination module). Interacts directly with SGF73, SUS1 and UBP8.

It is found in the nucleus. Its function is as follows. Functions as a component of the transcription regulatory histone acetylation (HAT) complex SAGA. At the promoters, SAGA is required for recruitment of the basal transcription machinery. It influences RNA polymerase II transcriptional activity through different activities such as TBP interaction and promoter selectivity, interaction with transcription activators, and chromatin modification through histone acetylation and deubiquitination. SAGA acetylates nucleosomal histone H3 to some extent (to form H3K9ac, H3K14ac, H3K18ac and H3K23ac). SAGA interacts with DNA via upstream activating sequences (UASs). Involved in transcriptional regulation of a subset of SAGA-regulated genes. Within the SAGA complex, participates in a subcomplex, that specifically deubiquitinates histones H2B. This chain is SAGA-associated factor 11, found in Saccharomyces cerevisiae (strain YJM789) (Baker's yeast).